The primary structure comprises 69 residues: MEPLSIDKPFMYFDEINNELEYDPDSANEKHKKFPYQGQLKLLLCELFFLSKLQRHGILDGSTIVYIGS.

Residue Tyr22 participates in mRNA binding. Residues Gln39, Tyr66, and Gly68 each contribute to the S-adenosyl-L-methionine site.

Belongs to the class I-like SAM-binding methyltransferase superfamily. Poxvirus/kinetoplastid 2'-O-MTase family. As to quaternary structure, interacts with poly(A) polymerase catalytic subunit OPG063. Interacts with OPG109 and OPG123; these interactions might help linking transcription to capping and polyadenylation.

It is found in the virion. The catalysed reaction is a 5'-end (N(7)-methyl 5'-triphosphoguanosine)-ribonucleoside in mRNA + S-adenosyl-L-methionine = a 5'-end (N(7)-methyl 5'-triphosphoguanosine)-(2'-O-methyl-ribonucleoside) in mRNA + S-adenosyl-L-homocysteine + H(+). In terms of biological role, displays methyltransferase, positive regulation of the poly(A) polymerase and transcription elongation activities. Involved in the modification of both mRNA ends and in intermediate and late gene positive transcription elongation. At the mRNAs 5' end, methylates the ribose 2' OH group of the first transcribed nucleotide, thereby producing a 2'-O-methylpurine cap. At the 3' end, functions as a processivity factor which stimulates the activity of the viral poly(A) polymerase OPG063 that creates mRNA's poly(A) tail. In the presence of OPG102, OPG063 does not dissociate from the RNA allowing tail elongation to around 250 adenylates. The sequence is that of Cap-specific mRNA (nucleoside-2'-O-)-methyltransferase (OPG102) from Sus scrofa (Pig).